The sequence spans 1406 residues: EF-hand calcium-binding domain-containing protein 5 (1406 aa).

Residues 255-655 form a disordered region; sequence NKDLPQQQRD…KACEPKPQHV (401 aa). 8 stretches are compositionally biased toward polar residues: residues 258-294, 322-334, 342-354, 362-373, 382-393, 402-414, 422-434, and 442-464; these read LPQQQRDQELSSDSTTEPETATQLTSQQRSRRVSLTG, RRSSGVNQTQQRG, RRSSAVEQTQQRG, RRSSTVEQTRQR, RRSSTVEQTQRR, and RRSSAMEQEPQTAQDPNSDSLPE. Positions 465–477 are enriched in basic and acidic residues; it reads QESHRGSITEGSH. Residues 501-513 are compositionally biased toward low complexity; sequence DDSGSAGSRRGSG. Residues 564-577 are compositionally biased toward acidic residues; that stretch reads QELDEDSTPQLEDD. Composition is skewed to basic and acidic residues over residues 578 to 598 and 638 to 655; these read SALKESKTSELTKIETQEEKP and SKRDSQKDKACEPKPQHV. The EF-hand domain occupies 773–808; sequence RRRILLQAIFEKWDNDGSGFLDLNEVDDLLYTYKEG. Residues Asp786, Asp788, Ser790, and Glu797 each coordinate Ca(2+).

The protein is EF-hand calcium-binding domain-containing protein 5 (Efcab5) of Mus musculus (Mouse).